Consider the following 325-residue polypeptide: tRNA U34 carboxymethyltransferase (325 aa).

Carboxy-S-adenosyl-L-methionine is bound by residues Lys91, Trp105, Lys110, Gly130, 152–154 (DPS), 181–182 (ME), Met197, Tyr201, and Arg316.

This sequence belongs to the class I-like SAM-binding methyltransferase superfamily. CmoB family. In terms of assembly, homotetramer.

The catalysed reaction is carboxy-S-adenosyl-L-methionine + 5-hydroxyuridine(34) in tRNA = 5-carboxymethoxyuridine(34) in tRNA + S-adenosyl-L-homocysteine + H(+). Functionally, catalyzes carboxymethyl transfer from carboxy-S-adenosyl-L-methionine (Cx-SAM) to 5-hydroxyuridine (ho5U) to form 5-carboxymethoxyuridine (cmo5U) at position 34 in tRNAs. The polypeptide is tRNA U34 carboxymethyltransferase (Saccharophagus degradans (strain 2-40 / ATCC 43961 / DSM 17024)).